The primary structure comprises 162 residues: Large ribosomal subunit protein uL10 (162 aa).

This sequence belongs to the universal ribosomal protein uL10 family. Part of the ribosomal stalk of the 50S ribosomal subunit. The N-terminus interacts with L11 and the large rRNA to form the base of the stalk. The C-terminus forms an elongated spine to which L12 dimers bind in a sequential fashion forming a multimeric L10(L12)X complex.

Functionally, forms part of the ribosomal stalk, playing a central role in the interaction of the ribosome with GTP-bound translation factors. This chain is Large ribosomal subunit protein uL10, found in Borrelia garinii subsp. bavariensis (strain ATCC BAA-2496 / DSM 23469 / PBi) (Borreliella bavariensis).